The chain runs to 94 residues: Aspartyl/glutamyl-tRNA(Asn/Gln) amidotransferase subunit C (94 aa).

Belongs to the GatC family. As to quaternary structure, heterotrimer of A, B and C subunits.

It catalyses the reaction L-glutamyl-tRNA(Gln) + L-glutamine + ATP + H2O = L-glutaminyl-tRNA(Gln) + L-glutamate + ADP + phosphate + H(+). The enzyme catalyses L-aspartyl-tRNA(Asn) + L-glutamine + ATP + H2O = L-asparaginyl-tRNA(Asn) + L-glutamate + ADP + phosphate + 2 H(+). Its function is as follows. Allows the formation of correctly charged Asn-tRNA(Asn) or Gln-tRNA(Gln) through the transamidation of misacylated Asp-tRNA(Asn) or Glu-tRNA(Gln) in organisms which lack either or both of asparaginyl-tRNA or glutaminyl-tRNA synthetases. The reaction takes place in the presence of glutamine and ATP through an activated phospho-Asp-tRNA(Asn) or phospho-Glu-tRNA(Gln). The polypeptide is Aspartyl/glutamyl-tRNA(Asn/Gln) amidotransferase subunit C (Caldicellulosiruptor bescii (strain ATCC BAA-1888 / DSM 6725 / KCTC 15123 / Z-1320) (Anaerocellum thermophilum)).